The following is a 426-amino-acid chain: uncharacterized protein (426 aa).

His-277 is a binding site for Zn(2+). Residue Glu-278 is part of the active site. 2 residues coordinate Zn(2+): His-281 and Glu-357.

This sequence belongs to the peptidase M48B family. Zn(2+) serves as cofactor.

This is an uncharacterized protein from Bacillus subtilis (strain 168).